Here is a 303-residue protein sequence, read N- to C-terminus: Probable 5-dehydro-4-deoxyglucarate dehydratase (303 aa).

It belongs to the DapA family.

The enzyme catalyses 5-dehydro-4-deoxy-D-glucarate + H(+) = 2,5-dioxopentanoate + CO2 + H2O. Its pathway is carbohydrate acid metabolism; D-glucarate degradation; 2,5-dioxopentanoate from D-glucarate: step 2/2. In Polaromonas naphthalenivorans (strain CJ2), this protein is Probable 5-dehydro-4-deoxyglucarate dehydratase.